The sequence spans 209 residues: CASP-like protein 2A2 (209 aa).

Residues 1 to 37 are Cytoplasmic-facing; that stretch reads MSKTAGVGRLGGARAADAAQQQQLAAGDAAVARAARP. Residues 38 to 58 form a helical membrane-spanning segment; the sequence is IETLLRAAPLVLCVAAMTLML. Residues 59 to 79 are Extracellular-facing; that stretch reads RDQQSNEYGTVAYSDLGGFKY. Residues 80 to 100 form a helical membrane-spanning segment; sequence LVYANGLCAAYSLASAFYTAV. The Cytoplasmic portion of the chain corresponds to 101–109; the sequence is PRPATVSRS. The helical transmembrane segment at 110-130 threads the bilayer; it reads WVVFLLDQVFTYLILAAGAAA. Topologically, residues 131–161 are extracellular; that stretch reads AELLYLAYNGDKEVTWSEACGVFGSFCRQAR. A helical membrane pass occupies residues 162-182; the sequence is ISVAITFGAVLCFILLSLLSS. At 183–209 the chain is on the cytoplasmic side; sequence YRLFSAYEAPPPSALGSKGVEIAAYPR.

This sequence belongs to the Casparian strip membrane proteins (CASP) family. Homodimer and heterodimers.

Its subcellular location is the cell membrane. In Zea mays (Maize), this protein is CASP-like protein 2A2.